Consider the following 223-residue polypeptide: Ribonuclease 3 (223 aa).

In terms of domain architecture, RNase III spans 3–125 (LEKLQKKLGH…LIAAIYLDAG (123 aa)). Glutamate 38 contributes to the Mg(2+) binding site. Residue aspartate 42 is part of the active site. Mg(2+)-binding residues include aspartate 111 and glutamate 114. Glutamate 114 is an active-site residue. One can recognise a DRBM domain in the interval 152–222 (DPKTRLQEFL…AQQAIEKLKI (71 aa)).

This sequence belongs to the ribonuclease III family. Homodimer. Requires Mg(2+) as cofactor.

It is found in the cytoplasm. It carries out the reaction Endonucleolytic cleavage to 5'-phosphomonoester.. Functionally, digests double-stranded RNA. Involved in the processing of primary rRNA transcript to yield the immediate precursors to the large and small rRNAs (23S and 16S). Processes some mRNAs, and tRNAs when they are encoded in the rRNA operon. Processes pre-crRNA and tracrRNA of type II CRISPR loci if present in the organism. The sequence is that of Ribonuclease 3 from Histophilus somni (strain 2336) (Haemophilus somnus).